The sequence spans 39 residues: Cytochrome b559 subunit beta (39 aa).

Residues 14 to 30 traverse the membrane as a helical segment; the sequence is WLAIHGLAVPTVFFLGS. His18 serves as a coordination point for heme.

The protein belongs to the PsbE/PsbF family. In terms of assembly, heterodimer of an alpha subunit and a beta subunit. PSII is composed of 1 copy each of membrane proteins PsbA, PsbB, PsbC, PsbD, PsbE, PsbF, PsbH, PsbI, PsbJ, PsbK, PsbL, PsbM, PsbT, PsbX, PsbY, PsbZ, Psb30/Ycf12, at least 3 peripheral proteins of the oxygen-evolving complex and a large number of cofactors. It forms dimeric complexes. The cofactor is heme b.

The protein resides in the plastid. It localises to the chloroplast thylakoid membrane. In terms of biological role, this b-type cytochrome is tightly associated with the reaction center of photosystem II (PSII). PSII is a light-driven water:plastoquinone oxidoreductase that uses light energy to abstract electrons from H(2)O, generating O(2) and a proton gradient subsequently used for ATP formation. It consists of a core antenna complex that captures photons, and an electron transfer chain that converts photonic excitation into a charge separation. The protein is Cytochrome b559 subunit beta of Psilotum nudum (Whisk fern).